Here is a 509-residue protein sequence, read N- to C-terminus: Inositol-3-phosphate synthase 1 (509 aa).

Belongs to the myo-inositol 1-phosphate synthase family. The cofactor is NAD(+). In terms of tissue distribution, highly expressed in anthers, but transcripts are undetectable in roots, leaves, flowers and embryos.

The protein resides in the cytoplasm. It carries out the reaction D-glucose 6-phosphate = 1D-myo-inositol 3-phosphate. The protein operates within polyol metabolism; myo-inositol biosynthesis; myo-inositol from D-glucose 6-phosphate: step 1/2. Key enzyme in myo-inositol biosynthesis pathway that catalyzes the conversion of glucose 6-phosphate to 1-myo-inositol 1-phosphate in a NAD-dependent manner. Is a key enzyme in the phytic acid biosynthesis pathway in seeds. This chain is Inositol-3-phosphate synthase 1, found in Oryza sativa subsp. japonica (Rice).